The following is a 445-amino-acid chain: Phosphoglucosamine mutase (445 aa).

The active-site Phosphoserine intermediate is the S102. Mg(2+) contacts are provided by S102, D240, D242, and D244. The residue at position 102 (S102) is a Phosphoserine.

It belongs to the phosphohexose mutase family. Mg(2+) is required as a cofactor. Post-translationally, activated by phosphorylation.

It carries out the reaction alpha-D-glucosamine 1-phosphate = D-glucosamine 6-phosphate. Functionally, catalyzes the conversion of glucosamine-6-phosphate to glucosamine-1-phosphate. This chain is Phosphoglucosamine mutase, found in Mycobacterium ulcerans (strain Agy99).